A 2000-amino-acid polypeptide reads, in one-letter code: E3 ubiquitin-protein ligase TTC3 (2000 aa).

The segment at 20–249 (MDDFAEGGLS…RHSCMQCVKQ (230 aa)) is interaction with POLG. TPR repeat units lie at residues 250-283 (GELMKMRGNEEFAKEKFEIAVIYYTRAIEYRPEN) and 284-317 (HLLYGNRALCFLRMGQFRNALSDGKRAIVLKNTW). Position 397 is a phosphoserine (Ser-397). The disordered stretch occupies residues 442–478 (CDCHPEFLPPPSQPPRHKGKQKSRNNESEKPSSNSQV). 2 TPR repeats span residues 556-592 (VLVVYGLAVSLLGIGRPEELSEAENQFKRIIEHYPNE) and 596-629 (CLAYCGIGKVYLKKNRFLEALNHFEKAKTLICRL). Positions 804-828 (AQERMEEDLRESNPPKPEEPEETVE) are disordered. Phosphoserine is present on Ser-1029. Disordered regions lie at residues 1041 to 1087 (NKGK…GPFA), 1233 to 1308 (FQPD…PEDA), 1423 to 1448 (QSSTADARTALSEPEGNSRHSGSSDS), 1806 to 1839 (LEVKKASQVSPSEQNPEADEKPSGQATRSSQSQK), and 1894 to 1947 (EEQK…VPAP). The span at 1059–1070 (GTASVTPSSETV) shows a compositional bias: polar residues. Ser-1080 carries the phosphoserine modification. Positions 1268 to 1277 (DSDSSSGSAS) are enriched in low complexity. The span at 1829–1839 (GQATRSSQSQK) shows a compositional bias: polar residues. Over residues 1894–1911 (EEQKKKKPNPGKDKKTSE) the composition is skewed to basic and acidic residues. Over residues 1912-1934 (AHPAASVSKSSPSPPLAAAGPSA) the composition is skewed to low complexity. The RING-type; atypical zinc-finger motif lies at 1952-1991 (CQICHEIFKSKNMRVLKCGHKFHKGCFKQWLKGQSTCPTC).

As to quaternary structure, interacts (when phosphorylated on Ser-397) with AKT1, AKT2 and AKT3 (when phosphorylated). Interacts with CIT. Interacts with POLG. Interacts with HSP70. Interacts with SMURF2. In terms of processing, phosphorylation on Ser-397 by Akt is required for ubiquitin ligase activity. Post-translationally, proteolytically cleaved into differently sized N- and C-terminal fragments.

It localises to the nucleus. The protein localises to the cytoplasm. It is found in the golgi apparatus. It carries out the reaction S-ubiquitinyl-[E2 ubiquitin-conjugating enzyme]-L-cysteine + [acceptor protein]-L-lysine = [E2 ubiquitin-conjugating enzyme]-L-cysteine + N(6)-ubiquitinyl-[acceptor protein]-L-lysine.. It functions in the pathway protein modification; protein ubiquitination. E3 ubiquitin-protein ligase which catalyzes the formation of 'Lys-48'-polyubiquitin chains. Mediates the ubiquitination and subsequent degradation of phosphorylated Akt (AKT1, AKT2 and AKT3) in the nucleus. Acts as a terminal regulator of Akt signaling after activation; its phosphorylation by Akt, which is a prerequisite for ubiquitin ligase activity, suggests the existence of a regulation mechanism required to control Akt levels after activation. Positively regulates TGFB1-induced epithelial-mesenchymal transition and myofibroblast differentiation by mediating the ubiquitination and subsequent degradation of SMURF2. Regulates neuronal differentiation by regulating actin remodeling and Golgi organization via a signaling cascade involving RHOA, CIT and ROCK. Inhibits cell proliferation. In Rattus norvegicus (Rat), this protein is E3 ubiquitin-protein ligase TTC3.